The following is a 318-amino-acid chain: Dehydrogenase/reductase SDR family member 7C-B (318 aa).

The signal sequence occupies residues 1 to 32 (MGMSDIMWLDVSWAWLVLTAVLLAAAVFYLYT). Residue 49–73 (LITDSLSTVGNECAKLFHAGGARLI) coordinates NAD(+). Serine 186 contacts substrate. Tyrosine 199 (proton acceptor) is an active-site residue.

It belongs to the short-chain dehydrogenases/reductases (SDR) family.

Its subcellular location is the secreted. Putative oxidoreductase. This is Dehydrogenase/reductase SDR family member 7C-B (dhrs7cb) from Danio rerio (Zebrafish).